Reading from the N-terminus, the 201-residue chain is Recombination protein RecR (201 aa).

A C4-type zinc finger spans residues 58–73 (CEQCASITDTCPCRIC). The Toprim domain occupies 81–178 (DKLCLVSEWD…ELSRLAQGIP (98 aa)).

Belongs to the RecR family.

Its function is as follows. May play a role in DNA repair. It seems to be involved in an RecBC-independent recombinational process of DNA repair. It may act with RecF and RecO. The polypeptide is Recombination protein RecR (Maridesulfovibrio salexigens (strain ATCC 14822 / DSM 2638 / NCIMB 8403 / VKM B-1763) (Desulfovibrio salexigens)).